Here is a 130-residue protein sequence, read N- to C-terminus: Cystatin domain-containing protein 1 (130 aa).

The signal sequence occupies residues 1 to 23; it reads MSWKVPMLVGLVVLGTHIWTINK. The Cystatin domain occupies 37-116; that stretch reads ASVEFAVAQF…CVFQVDARPW (80 aa). Intrachain disulfides connect Cys84–Cys94 and Cys107–Cys127.

The protein belongs to the cystatin family.

Its subcellular location is the secreted. Functionally, may play a specialized role in spermatogenesis. The chain is Cystatin domain-containing protein 1 from Rattus norvegicus (Rat).